Reading from the N-terminus, the 145-residue chain is Large ribosomal subunit protein uL13 (145 aa).

It belongs to the universal ribosomal protein uL13 family. In terms of assembly, part of the 50S ribosomal subunit.

Functionally, this protein is one of the early assembly proteins of the 50S ribosomal subunit, although it is not seen to bind rRNA by itself. It is important during the early stages of 50S assembly. The chain is Large ribosomal subunit protein uL13 from Halobacterium salinarum (strain ATCC 700922 / JCM 11081 / NRC-1) (Halobacterium halobium).